Reading from the N-terminus, the 257-residue chain is Ditrans,polycis-undecaprenyl-diphosphate synthase ((2E,6E)-farnesyl-diphosphate specific) (257 aa).

Asp-23 is a catalytic residue. Asp-23 lines the Mg(2+) pocket. Substrate-binding positions include 24–27, Trp-28, Arg-36, His-40, and 68–70; these read GNGR and SSE. Asn-71 (proton acceptor) is an active-site residue. Residues Trp-72, Arg-74, Arg-191, and 197 to 199 each bind substrate; that span reads RIS. A Mg(2+)-binding site is contributed by Glu-210.

This sequence belongs to the UPP synthase family. In terms of assembly, homodimer. The cofactor is Mg(2+).

The catalysed reaction is 8 isopentenyl diphosphate + (2E,6E)-farnesyl diphosphate = di-trans,octa-cis-undecaprenyl diphosphate + 8 diphosphate. Functionally, catalyzes the sequential condensation of isopentenyl diphosphate (IPP) with (2E,6E)-farnesyl diphosphate (E,E-FPP) to yield (2Z,6Z,10Z,14Z,18Z,22Z,26Z,30Z,34E,38E)-undecaprenyl diphosphate (di-trans,octa-cis-UPP). UPP is the precursor of glycosyl carrier lipid in the biosynthesis of bacterial cell wall polysaccharide components such as peptidoglycan and lipopolysaccharide. This Xanthomonas axonopodis pv. citri (strain 306) protein is Ditrans,polycis-undecaprenyl-diphosphate synthase ((2E,6E)-farnesyl-diphosphate specific).